The primary structure comprises 511 residues: MRIIPRTMSTQHPDNAKVPEWAKSEVIEGEDEVKEAFLAYSMYGVHEVMWDAEGKDVDTHVVRKLLSNYPDYFREHILGKDVFLTYRLPNPKVEGADRKVFAETMESIPITYDLAEKFYGNGITVPVFEVILPMTTSNLEIISVARYYEKAVANEDELELYNGVKVKDLVGEIYPKVIEVIPLVEDRDSLQNIDNIVEGYYKVIKPKYMRVFLARSDPAMNYGMITAVLSVKIALSELYKLSESLNFEIYPIIGVGSLPFRGHLSPENYEKVLEEYKGVYTYTIQSAFKYDYDYDKVKSAISSINNSRIGPAKILEKYEEDVLRKITILYTERYQPIIESLANAINDVSVLLPRRRARKLHIGLFGYSRSAGKVSLPRAISFVGSLYSIGIPPELIGISSLSNLDEKEWDIFKQNYVNFKHDLQTAARFFNWESFELIKDIWKISEDTIAKIKEDIDYAESVIGIKLGDIDYDSRKHILMSSLFLLSFKEKILQESKKYLYEMALIRRSLG.

This sequence belongs to the PEPCase type 2 family. As to quaternary structure, homotetramer. Requires Mg(2+) as cofactor.

The catalysed reaction is oxaloacetate + phosphate = phosphoenolpyruvate + hydrogencarbonate. Catalyzes the irreversible beta-carboxylation of phosphoenolpyruvate (PEP) to form oxaloacetate (OAA), a four-carbon dicarboxylic acid source for the tricarboxylic acid cycle. This chain is Phosphoenolpyruvate carboxylase, found in Saccharolobus islandicus (strain M.16.27) (Sulfolobus islandicus).